The chain runs to 314 residues: Polyamine aminopropyltransferase (314 aa).

Residues 4–241 enclose the PABS domain; that stretch reads GMYFFEHVTP…LNFGFLLASD (238 aa). Gln33 contributes to the S-methyl-5'-thioadenosine binding site. Residues His64 and Glu88 each contribute to the spermidine site. S-methyl-5'-thioadenosine-binding positions include Asp108 and 140-141; that span reads DA. Asp158 acts as the Proton acceptor in catalysis. Residue Pro168 coordinates S-methyl-5'-thioadenosine.

This sequence belongs to the spermidine/spermine synthase family. In terms of assembly, homodimer or homotetramer.

It is found in the cytoplasm. The catalysed reaction is S-adenosyl 3-(methylsulfanyl)propylamine + putrescine = S-methyl-5'-thioadenosine + spermidine + H(+). The protein operates within amine and polyamine biosynthesis; spermidine biosynthesis; spermidine from putrescine: step 1/1. In terms of biological role, catalyzes the irreversible transfer of a propylamine group from the amino donor S-adenosylmethioninamine (decarboxy-AdoMet) to putrescine (1,4-diaminobutane) to yield spermidine. The protein is Polyamine aminopropyltransferase of Thermus thermophilus (strain ATCC BAA-163 / DSM 7039 / HB27).